We begin with the raw amino-acid sequence, 396 residues long: MTVRLILAKGREKSLLRRHPWIFSGAVQRLEGDALSGETIDILDSQGKWLARAAYSPESQILARVWTFQQDEVIDCAFFIRRLQQAQNWRDWLAQRDGLNGYRLIAGESDGLPGITIDRFQNFLVLQLLSAGAEYQRETLVSALQHCYPECSIYDRSDVSVRKKEGLPLTQGLICGEMPPALLPISENGMQLFVDIQQGHKTGFYLDQRDSRLAARNYANGRRVLNCFSYTGAFAVAALMGNCQQVISVDTSQSVLDIAKQNIELNQLDLSKTEFVRDDVFQLLRSYRAQGEKFDLIIMDPPKFVENKSQLASACRGYKDINMLAIQLLRPGGILLSFSCSGLMPVDLFQKILADAALDAGHDIQFIEQFRQAADHPVIAAYPEGLYLKGFACRIM.

Residues 2–81 (TVRLILAKGR…EVIDCAFFIR (80 aa)) enclose the PUA domain.

Belongs to the methyltransferase superfamily. RlmI family.

Its subcellular location is the cytoplasm. The catalysed reaction is cytidine(1962) in 23S rRNA + S-adenosyl-L-methionine = 5-methylcytidine(1962) in 23S rRNA + S-adenosyl-L-homocysteine + H(+). Specifically methylates the cytosine at position 1962 (m5C1962) of 23S rRNA. This Yersinia pseudotuberculosis serotype O:1b (strain IP 31758) protein is Ribosomal RNA large subunit methyltransferase I.